A 200-amino-acid polypeptide reads, in one-letter code: Large ribosomal subunit protein uL4 (200 aa).

Positions 43–72 are disordered; the sequence is RAQKTRAEVSGSGKKPWRQKGTGRARSGDI.

The protein belongs to the universal ribosomal protein uL4 family. Part of the 50S ribosomal subunit.

In terms of biological role, one of the primary rRNA binding proteins, this protein initially binds near the 5'-end of the 23S rRNA. It is important during the early stages of 50S assembly. It makes multiple contacts with different domains of the 23S rRNA in the assembled 50S subunit and ribosome. Its function is as follows. Forms part of the polypeptide exit tunnel. In Haemophilus ducreyi (strain 35000HP / ATCC 700724), this protein is Large ribosomal subunit protein uL4.